The sequence spans 106 residues: Putative double-stranded DNA mimic protein PM0536 (106 aa).

It belongs to the putative dsDNA mimic protein family.

Functionally, may act as a double-stranded DNA (dsDNA) mimic. Probably regulates the activity of a dsDNA-binding protein. The sequence is that of Putative double-stranded DNA mimic protein PM0536 from Pasteurella multocida (strain Pm70).